A 113-amino-acid chain; its full sequence is Na(+)/H(+) antiporter subunit C1 (113 aa).

The next 3 helical transmembrane spans lie at Met-1 to Leu-21, Ile-28 to Gly-48, and Leu-72 to Phe-92.

The protein belongs to the CPA3 antiporters (TC 2.A.63) subunit C family. As to quaternary structure, may form a heterooligomeric complex that consists of seven subunits: mnhA1, mnhB1, mnhC1, mnhD1, mnhE1, mnhF1 and mnhG1.

It localises to the cell membrane. In terms of biological role, mnh complex is a Na(+)/H(+) antiporter involved in Na(+) excretion. The sequence is that of Na(+)/H(+) antiporter subunit C1 (mnhC1) from Staphylococcus aureus (strain JH1).